Reading from the N-terminus, the 372-residue chain is Steroid C26-monooxygenase (372 aa).

Residue C314 coordinates heme.

The protein belongs to the cytochrome P450 family. Heme serves as cofactor.

It catalyses the reaction cholest-4-en-3-one + 6 reduced [2Fe-2S]-[ferredoxin] + 3 O2 + 5 H(+) = (25R)-3-oxocholest-4-en-26-oate + 6 oxidized [2Fe-2S]-[ferredoxin] + 4 H2O. It participates in steroid metabolism; cholesterol degradation. Functionally, involved in the utilization of cholesterol as the sole carbon and energy source by degrading the side chain during infection. Primarily catalyzes the sequential oxidation of the terminal methyl of cholest-4-en-3-one into (25R)-26-hydroxycholest-4-en-3-one (alcohol), (25R)-26-oxocholest-4-en-3-one (aldehyde), to finally yield the carboxylic acid (25R)-3-oxocholest-4-en-26-oate. Also able to sequentially oxidize cholesterol itself, not only cholest-4-en-3-one. The sequence is that of Steroid C26-monooxygenase (cyp142) from Mycobacterium tuberculosis (strain CDC 1551 / Oshkosh).